Reading from the N-terminus, the 334-residue chain is Protein-methionine-sulfoxide reductase catalytic subunit MsrP (334 aa).

The tat-type signal signal peptide spans 1–44 (MKKKQFLKESDVTAESVFFMKRRQVLKALGISAAALSLPHAAHA). Mo-molybdopterin-binding positions include N88, 91 to 92 (YE), C146, T181, N233, R238, and 249 to 251 (GIK).

It belongs to the MsrP family. As to quaternary structure, heterodimer of a catalytic subunit (MsrP) and a heme-binding subunit (MsrQ). Mo-molybdopterin serves as cofactor. Post-translationally, predicted to be exported by the Tat system. The position of the signal peptide cleavage has not been experimentally proven.

The protein localises to the periplasm. The catalysed reaction is L-methionyl-[protein] + a quinone + H2O = L-methionyl-(S)-S-oxide-[protein] + a quinol. It carries out the reaction L-methionyl-[protein] + a quinone + H2O = L-methionyl-(R)-S-oxide-[protein] + a quinol. Functionally, part of the MsrPQ system that repairs oxidized periplasmic proteins containing methionine sulfoxide residues (Met-O), using respiratory chain electrons. Thus protects these proteins from oxidative-stress damage caused by reactive species of oxygen and chlorine generated by the host defense mechanisms. MsrPQ is essential for the maintenance of envelope integrity under bleach stress, rescuing a wide series of structurally unrelated periplasmic proteins from methionine oxidation, including the primary periplasmic chaperone SurA and the lipoprotein Pal. The catalytic subunit MsrP is non-stereospecific, being able to reduce both (R-) and (S-) diastereoisomers of methionine sulfoxide. In Escherichia coli O139:H28 (strain E24377A / ETEC), this protein is Protein-methionine-sulfoxide reductase catalytic subunit MsrP.